The following is a 625-amino-acid chain: Alpha-1,3-galactosidase A (625 aa).

Positions 1 to 32 are cleaved as a signal peptide; sequence MAHGCSGGAMSRFVFLGVALALLGGATSPAAA. PbH1 repeat units follow at residues 342–364, 460–482, 483–505, 516–537, and 573–611; these read KGKV…NIHG, TPSV…LVTT, RKPV…YVSA, VADL…IFVE, and VGGF…RIAR.

The protein belongs to the glycosyl hydrolase 110 family. A subfamily.

It catalyses the reaction Hydrolysis of terminal, non-reducing branched (1-&gt;3)-alpha-D-galactosidic residues, producing free D-galactose.. It carries out the reaction Hydrolysis of terminal, non-reducing alpha-D-galactose residues in alpha-D-galactosides, including galactose oligosaccharides, galactomannans and galactolipids.. Functionally, alpha-galactosidase that specifically removes branched alpha-1,3-linked galactose residues present in blood group B antigens. Has no activity toward linear alpha-1,3-linked galactose residues. This is Alpha-1,3-galactosidase A (glaA) from Streptomyces avermitilis (strain ATCC 31267 / DSM 46492 / JCM 5070 / NBRC 14893 / NCIMB 12804 / NRRL 8165 / MA-4680).